A 144-amino-acid polypeptide reads, in one-letter code: Large ribosomal subunit protein uL24 (144 aa).

The tract at residues 102–144 (NIVVEKPEPEPEPRKEETAEAQEAKEEAVAEEKTEVDDNDKQN) is disordered. A compositionally biased stretch (basic and acidic residues) spans 103–134 (IVVEKPEPEPEPRKEETAEAQEAKEEAVAEEK). Over residues 135–144 (TEVDDNDKQN) the composition is skewed to acidic residues.

It belongs to the universal ribosomal protein uL24 family. Part of the 50S ribosomal subunit.

Its function is as follows. One of two assembly initiator proteins, it binds directly to the 5'-end of the 23S rRNA, where it nucleates assembly of the 50S subunit. Located at the polypeptide exit tunnel on the outside of the subunit. This Thermoplasma acidophilum (strain ATCC 25905 / DSM 1728 / JCM 9062 / NBRC 15155 / AMRC-C165) protein is Large ribosomal subunit protein uL24 (rpl24).